A 409-amino-acid polypeptide reads, in one-letter code: MQHYTFCLCDGMYCPSKEYILKYCENNGNNYYINDSDNLIPINFSVYDYDNCGNYFTFNCILVDFENILKFNGFIARKKLSDILNVHMDKCKRSAFVIDYLDHITKNNTIKHIKYYLGNNYYNITCWNYYLQSKIFRYSDLSSIRSCLKYLPVDRISGYLVDCLIRNDNVILDYLVDKIIIYLRLSFTHKKYKGNMFKITDNNDKLSDILNVNCVMESIIHECANNNTIESYHQTIDRFQELLESQENVKVKKDLITKHNKLKLGFTLNDKTLNYLLGYILMERNGNPLIIVKQLLMDGANIYTEIDRDFGFTFFDQTITIIISNENLELLDILFEMKLISQDKLNYILEKSIGELNLKKDVKTINSKEFIRELSGYGADVDKYVDKLIKKANKYNNNKLVDYLKDLKD.

This sequence belongs to the mimivirus L17x/L18x family.

This is an uncharacterized protein from Acanthamoeba polyphaga mimivirus (APMV).